Reading from the N-terminus, the 432-residue chain is Glutamate-1-semialdehyde 2,1-aminomutase 2 (432 aa).

Lys-268 is subject to N6-(pyridoxal phosphate)lysine.

This sequence belongs to the class-III pyridoxal-phosphate-dependent aminotransferase family. HemL subfamily. As to quaternary structure, homodimer. Pyridoxal 5'-phosphate serves as cofactor.

Its subcellular location is the cytoplasm. It carries out the reaction (S)-4-amino-5-oxopentanoate = 5-aminolevulinate. The protein operates within porphyrin-containing compound metabolism; protoporphyrin-IX biosynthesis; 5-aminolevulinate from L-glutamyl-tRNA(Glu): step 2/2. The sequence is that of Glutamate-1-semialdehyde 2,1-aminomutase 2 from Listeria welshimeri serovar 6b (strain ATCC 35897 / DSM 20650 / CCUG 15529 / CIP 8149 / NCTC 11857 / SLCC 5334 / V8).